The sequence spans 472 residues: Exodeoxyribonuclease 7 large subunit (472 aa).

It belongs to the XseA family. Heterooligomer composed of large and small subunits.

Its subcellular location is the cytoplasm. It catalyses the reaction Exonucleolytic cleavage in either 5'- to 3'- or 3'- to 5'-direction to yield nucleoside 5'-phosphates.. Functionally, bidirectionally degrades single-stranded DNA into large acid-insoluble oligonucleotides, which are then degraded further into small acid-soluble oligonucleotides. This chain is Exodeoxyribonuclease 7 large subunit, found in Carboxydothermus hydrogenoformans (strain ATCC BAA-161 / DSM 6008 / Z-2901).